The sequence spans 325 residues: Small ribosomal subunit protein uS2 (325 aa).

Residues 212–226 (KEEQAKAEAERERLA) are compositionally biased toward basic and acidic residues. The segment at 212 to 325 (KEEQAKAEAE…TEPKASTGNW (114 aa)) is disordered. Composition is skewed to low complexity over residues 234–247 (QPAA…QWAD) and 261–289 (PVTT…TGSG). Positions 290 to 300 (FNQDDWSVPTT) are enriched in polar residues.

This sequence belongs to the universal ribosomal protein uS2 family. Component of the small ribosomal subunit. Mature ribosomes consist of a small (40S) and a large (60S) subunit. The 40S subunit contains about 33 different proteins and 1 molecule of RNA (18S). The 60S subunit contains about 49 different proteins and 3 molecules of RNA (28S, 5.8S and 5S). Interacts with ribosomal protein S21.

It localises to the cytoplasm. Its function is as follows. Required for the assembly and/or stability of the 40S ribosomal subunit. Required for the processing of the 20S rRNA-precursor to mature 18S rRNA in a late step of the maturation of 40S ribosomal subunits. The chain is Small ribosomal subunit protein uS2 from Suberites domuncula (Sponge).